A 99-amino-acid chain; its full sequence is Putative pterin-4-alpha-carbinolamine dehydratase (99 aa).

It belongs to the pterin-4-alpha-carbinolamine dehydratase family.

It catalyses the reaction (4aS,6R)-4a-hydroxy-L-erythro-5,6,7,8-tetrahydrobiopterin = (6R)-L-erythro-6,7-dihydrobiopterin + H2O. This chain is Putative pterin-4-alpha-carbinolamine dehydratase, found in Synechococcus sp. (strain CC9311).